Consider the following 443-residue polypeptide: Diels-Alderase poxQ (443 aa).

The signal sequence occupies residues 1 to 23; the sequence is MARIPLEFLSITLPVLLLAYCLA. 3 N-linked (GlcNAc...) asparagine glycosylation sites follow: asparagine 78, asparagine 97, and asparagine 145.

The protein belongs to the Diels-Alderase family.

It functions in the pathway secondary metabolite biosynthesis. Functionally, diels-Alderase; part of the gene cluster that mediates the biosynthesis of oxaleimides, cytotoxic compounds containing an unusual disubstituted succinimide moiety. The first step of the pathway is provided by the HR-PKS poxF that serves in a new mode of collaborative biosynthesis with the PKS-NRPS poxE, by providing the olefin containing amino acid substrate via the synthesis of an ACP-bound dec-4-enoate. The cytochrome P450 monooxygenase poxM-catalyzed oxidation at the alpha-position creates the enzyme-bound 2-hydroxydec-4-enoyl-ACP thioester, which may be prone to spontaneous hydrolysis to yield 2-hydroxydec-4-enoic acid due to increased electrophilicity of the carbonyl. 2-hydroxydec-4-enoic acid can then be further oxidized by poxM to yield the alpha-ketoacid 2-oxodec-4-enoicacid, which is reductively aminated by the aminotransferase poxL to yield (S,E)-2-aminodec-4-enoic acid. The Hybrid PKS-NRPS synthetase poxE then performs condensation between the octaketide product of its PKS modules and the amino group of (S,E)-2-aminodec-4-enoic acid which is activated and incorporated by the adenylation domain. The resulting aminoacyl product can be cyclized by the Diels-Alderase PoxQ and reductively released by the reductive (R) domain of poxE to yield an aldehyde intermediate. The released aldehyde is then substrate for a Knoevenagel condensation by the hydrolyase poxO followed by an oxidation at the 5-position of the pyrrolidone ring. The presence of the olefin from the amino acid building block allows for migration of the substituted allyl group to occur. This allylic transposition reaction takes place in a conjugate addition, semipinacol-like fashion to yield a succinimide intermediate. Iterative two-electron oxidations of the C7 methyl of the succinimide intermediate to the carboxylic acid can be catalyzed by one of two remaining cytochrome P450 monooxygenasess poxC or poxD to yield oxaleimide A. Subsequent oxidation yields the maleimide scaffold oxaleimide I. Both oxaleimide A and oxaleimide I can undergo oxidative modifications in the decalin ring to yield the series of products oxaleimides B to H. This Penicillium oxalicum protein is Diels-Alderase poxQ.